Here is a 768-residue protein sequence, read N- to C-terminus: MQRPFLLAYLVLSLLFNSALGFPTALVPRGSSSSNITSSGPSSTPFSSATESFSTGTTVTPSSSKYPGSKTETSVSSTTETTIVPTTTTTSVITPSTTTITTTVCSTGTNSAGETTSGCSPKTITTTVPCSTSPSETASESTTTSPTTPVTTVVSTTVVTTEYASTSTKQGGEITTTFVTKNIPTTYLTTIAPTSSVTTVTNFTPTTITTTVCSTGTNSAGETTSGCSPKTVTTTVPCSTGTGEYTTEATAPVTTAVTTTVVTTESSTGTNSAGKTTTSYTTKSVPTTYVFDFGKGILDQSCGGVFSNNGSSQVQLRDVVLMNGTVVYDSNGAWDSSPLEEWLQRQKKVSIERIFENIGPSAVYPSILPGVVIASPSQTHPDYFYQWIRDSALTINSIVSHSADPAIETLLQYLNVSFHLQRTNNTLGAGIGYTNDTVALGDPKWNVDNTAFTEPWGRPQNDGPALRSIAILKIIDYIKQSGTDLGAKYPFQSTADIFDDIVRWDLRFIIDHWNSSGFDLWEEVNGMHFFTLLVQLSAVDRSLSYFNASERSSPFVEELRQTRRDISKFLVDPANGFINGKYNYIVETPMIADTLRSGLDISTLLAANTVHDAPSASHLPFDIDDPAVLNTLHHLMLHMRSIYPINDSSKNATGIALGRYPEDVYDGYGVGEGNPWVLATCAASTTLYQLIYRHISEQHDLVVPMNNDCSNAFWSELVFSNLTTLGNDEGYLILEFNTPAFNQTIQKIFQLADSFLVKLKATWEQTGN.

An N-terminal signal peptide occupies residues 1 to 21 (MQRPFLLAYLVLSLLFNSALG). Disordered regions lie at residues 29-83 (RGSS…ETTI) and 125-149 (TTTVPCSTSPSETASESTTTSPTTP). Low complexity predominate over residues 30–48 (GSSSSNITSSGPSSTPFSS). N-linked (GlcNAc...) asparagine glycosylation is present at Asn-35. Over residues 49 to 66 (ATESFSTGTTVTPSSSKY) the composition is skewed to polar residues. 2 stretches are compositionally biased toward low complexity: residues 71-83 (TETSVSSTTETTI) and 131-149 (STSPSETASESTTTSPTTP). N-linked (GlcNAc...) asparagine glycans are attached at residues Asn-309, Asn-323, Asn-415, Asn-424, and Asn-435. The tract at residues 349-692 (VSIERIFENI…ASTTLYQLIY (344 aa)) is h subunit. Trp-456 is a binding site for substrate. N-linked (GlcNAc...) asparagine glycosylation is present at Asn-514. Asp-519 serves as the catalytic Proton acceptor. Glu-522 serves as the catalytic Proton donor. Asn-547, Asn-646, Asn-651, Asn-721, and Asn-742 each carry an N-linked (GlcNAc...) asparagine glycan. The interval 693–768 (RHISEQHDLV…LKATWEQTGN (76 aa)) is y subunit.

This sequence belongs to the glycosyl hydrolase 15 family.

It catalyses the reaction Hydrolysis of terminal (1-&gt;4)-linked alpha-D-glucose residues successively from non-reducing ends of the chains with release of beta-D-glucose.. In Saccharomyces cerevisiae (Baker's yeast), this protein is Glucoamylase S2 (STA2).